A 461-amino-acid chain; its full sequence is UDP-glucose 6-dehydrogenase TuaD (461 aa).

NAD(+)-binding positions include 3–20, V12, D31, K36, T122, and E156; that span reads KIAV…GTCF. Residues 152–156, K205, N209, 250–254, and G258 each bind substrate; these read EFLRE and FLKAG. C261 serves as the catalytic Nucleophile. K264 provides a ligand contact to NAD(+). K321 contacts substrate. R328 is an NAD(+) binding site.

It belongs to the UDP-glucose/GDP-mannose dehydrogenase family. In terms of processing, phosphorylated by YwqD and dephosphorylated by YwqE in vitro.

It is found in the cytoplasm. It carries out the reaction UDP-alpha-D-glucose + 2 NAD(+) + H2O = UDP-alpha-D-glucuronate + 2 NADH + 3 H(+). The protein operates within nucleotide-sugar biosynthesis; UDP-alpha-D-glucuronate biosynthesis; UDP-alpha-D-glucuronate from UDP-alpha-D-glucose: step 1/1. With respect to regulation, activated by phosphorylation; inhibited by dephosphorylation. Its function is as follows. Catalyzes the conversion of UDP-glucose into UDP-glucuronate, one of the precursors of teichuronic acid. The polypeptide is UDP-glucose 6-dehydrogenase TuaD (tuaD) (Bacillus subtilis (strain 168)).